The sequence spans 232 residues: 2,3,4,5-tetrahydropyridine-2,6-dicarboxylate N-acetyltransferase (232 aa).

Belongs to the transferase hexapeptide repeat family. DapH subfamily.

The catalysed reaction is (S)-2,3,4,5-tetrahydrodipicolinate + acetyl-CoA + H2O = L-2-acetamido-6-oxoheptanedioate + CoA. It participates in amino-acid biosynthesis; L-lysine biosynthesis via DAP pathway; LL-2,6-diaminopimelate from (S)-tetrahydrodipicolinate (acetylase route): step 1/3. In terms of biological role, catalyzes the transfer of an acetyl group from acetyl-CoA to tetrahydrodipicolinate. The sequence is that of 2,3,4,5-tetrahydropyridine-2,6-dicarboxylate N-acetyltransferase from Streptococcus suis (strain 98HAH33).